An 874-amino-acid polypeptide reads, in one-letter code: Probable inorganic carbon transporter subunit DabA (874 aa).

Zn(2+)-binding residues include Cys398, Asp400, His580, and Cys595.

Belongs to the inorganic carbon transporter (TC 9.A.2) DabA family. In terms of assembly, forms a complex with DabB. The cofactor is Zn(2+).

The protein localises to the cell membrane. Part of an energy-coupled inorganic carbon pump. In Bacillus cereus (strain Q1), this protein is Probable inorganic carbon transporter subunit DabA.